The sequence spans 431 residues: MITAPIRTTARDTQIFDLISKEAHRQEEGIELIASENFTSKQVMEAMGSVLTNKYAEGLPGKRYYGGCQVVDQVEQIAIDRLKKLFGAEWANVQPHSGAQANAAIMIACLNPGDSILGFDLSHGGHLSHGSPVNMSGKYFKAHFYGVEKESGLINMDIVEATALKVKPKMIICGASAYSRDWDYARFRKIADSVGAILLADISHPAGLIAKGLLNDPIPHCHIVSTTTHKTLRGPRGGVIMMGKDFENPFGLKTPKGETRMMSNVLDMGVFPGTQGGPLEHVIAAKAVAFQEALSTDYLQYAKQIQKNAQIMAEAFLKKGYDIISGGTDNHLMLIDLRSKNLTGKEAENALIRADITINKNMVPFDDKSPFVTSGMRVGTAAITSRGMVGDDMIRIVEMIDTVLMNQTKDSVIETVRKDVNNWMAQYPLYI.

Residues L121 and 125–127 (GHL) each bind (6S)-5,6,7,8-tetrahydrofolate. K230 carries the post-translational modification N6-(pyridoxal phosphate)lysine. 369-371 (SPF) contributes to the (6S)-5,6,7,8-tetrahydrofolate binding site.

It belongs to the SHMT family. As to quaternary structure, homodimer. Pyridoxal 5'-phosphate is required as a cofactor.

Its subcellular location is the cytoplasm. The enzyme catalyses (6R)-5,10-methylene-5,6,7,8-tetrahydrofolate + glycine + H2O = (6S)-5,6,7,8-tetrahydrofolate + L-serine. It functions in the pathway one-carbon metabolism; tetrahydrofolate interconversion. It participates in amino-acid biosynthesis; glycine biosynthesis; glycine from L-serine: step 1/1. Its function is as follows. Catalyzes the reversible interconversion of serine and glycine with tetrahydrofolate (THF) serving as the one-carbon carrier. This reaction serves as the major source of one-carbon groups required for the biosynthesis of purines, thymidylate, methionine, and other important biomolecules. Also exhibits THF-independent aldolase activity toward beta-hydroxyamino acids, producing glycine and aldehydes, via a retro-aldol mechanism. The protein is Serine hydroxymethyltransferase of Cytophaga hutchinsonii (strain ATCC 33406 / DSM 1761 / CIP 103989 / NBRC 15051 / NCIMB 9469 / D465).